The primary structure comprises 249 residues: Type III pantothenate kinase (249 aa).

Residue 6-13 (DCGNSFIK) participates in ATP binding. Residues Y93 and 100 to 103 (GMDR) contribute to the substrate site. D102 (proton acceptor) is an active-site residue. Position 122 (D122) interacts with K(+). An ATP-binding site is contributed by T125. Residue T181 coordinates substrate.

Belongs to the type III pantothenate kinase family. As to quaternary structure, homodimer. The cofactor is NH4(+). K(+) is required as a cofactor.

It is found in the cytoplasm. It carries out the reaction (R)-pantothenate + ATP = (R)-4'-phosphopantothenate + ADP + H(+). Its pathway is cofactor biosynthesis; coenzyme A biosynthesis; CoA from (R)-pantothenate: step 1/5. Catalyzes the phosphorylation of pantothenate (Pan), the first step in CoA biosynthesis. This chain is Type III pantothenate kinase, found in Pseudomonas putida (strain W619).